Here is a 194-residue protein sequence, read N- to C-terminus: Imidazoleglycerol-phosphate dehydratase (194 aa).

Belongs to the imidazoleglycerol-phosphate dehydratase family.

It is found in the cytoplasm. It catalyses the reaction D-erythro-1-(imidazol-4-yl)glycerol 3-phosphate = 3-(imidazol-4-yl)-2-oxopropyl phosphate + H2O. It functions in the pathway amino-acid biosynthesis; L-histidine biosynthesis; L-histidine from 5-phospho-alpha-D-ribose 1-diphosphate: step 6/9. The polypeptide is Imidazoleglycerol-phosphate dehydratase (Ruminiclostridium cellulolyticum (strain ATCC 35319 / DSM 5812 / JCM 6584 / H10) (Clostridium cellulolyticum)).